Consider the following 379-residue polypeptide: Queuine tRNA-ribosyltransferase (379 aa).

Aspartate 94 serves as the catalytic Proton acceptor. Residues 94–98 (DSGGF), aspartate 148, glutamine 191, and glycine 218 contribute to the substrate site. The segment at 249–255 (GVGSPDA) is RNA binding. The active-site Nucleophile is the aspartate 268. Positions 273–277 (TRIAR) are RNA binding; important for wobble base 34 recognition. Residues cysteine 306, cysteine 308, cysteine 311, and histidine 337 each contribute to the Zn(2+) site.

Belongs to the queuine tRNA-ribosyltransferase family. In terms of assembly, homodimer. Within each dimer, one monomer is responsible for RNA recognition and catalysis, while the other monomer binds to the replacement base PreQ1. Zn(2+) is required as a cofactor.

The enzyme catalyses 7-aminomethyl-7-carbaguanine + guanosine(34) in tRNA = 7-aminomethyl-7-carbaguanosine(34) in tRNA + guanine. Its pathway is tRNA modification; tRNA-queuosine biosynthesis. Its function is as follows. Catalyzes the base-exchange of a guanine (G) residue with the queuine precursor 7-aminomethyl-7-deazaguanine (PreQ1) at position 34 (anticodon wobble position) in tRNAs with GU(N) anticodons (tRNA-Asp, -Asn, -His and -Tyr). Catalysis occurs through a double-displacement mechanism. The nucleophile active site attacks the C1' of nucleotide 34 to detach the guanine base from the RNA, forming a covalent enzyme-RNA intermediate. The proton acceptor active site deprotonates the incoming PreQ1, allowing a nucleophilic attack on the C1' of the ribose to form the product. After dissociation, two additional enzymatic reactions on the tRNA convert PreQ1 to queuine (Q), resulting in the hypermodified nucleoside queuosine (7-(((4,5-cis-dihydroxy-2-cyclopenten-1-yl)amino)methyl)-7-deazaguanosine). In Oceanobacillus iheyensis (strain DSM 14371 / CIP 107618 / JCM 11309 / KCTC 3954 / HTE831), this protein is Queuine tRNA-ribosyltransferase.